Consider the following 224-residue polypeptide: Ribose-5-phosphate isomerase A (224 aa).

Residues 33–36 (TGST), 86–89 (DGAD), and 99–102 (KGGG) each bind substrate. Glutamate 108 acts as the Proton acceptor in catalysis. Lysine 126 contacts substrate.

Belongs to the ribose 5-phosphate isomerase family. In terms of assembly, homodimer.

The enzyme catalyses aldehydo-D-ribose 5-phosphate = D-ribulose 5-phosphate. It functions in the pathway carbohydrate degradation; pentose phosphate pathway; D-ribose 5-phosphate from D-ribulose 5-phosphate (non-oxidative stage): step 1/1. In terms of biological role, catalyzes the reversible conversion of ribose-5-phosphate to ribulose 5-phosphate. This is Ribose-5-phosphate isomerase A from Bordetella avium (strain 197N).